The chain runs to 273 residues: Thiazole synthase (273 aa).

Catalysis depends on lysine 113, which acts as the Schiff-base intermediate with DXP. 1-deoxy-D-xylulose 5-phosphate-binding positions include glycine 174, 201-202 (AG), and 223-224 (NT).

The protein belongs to the ThiG family. In terms of assembly, homotetramer. Forms heterodimers with either ThiH or ThiS.

It is found in the cytoplasm. The enzyme catalyses [ThiS sulfur-carrier protein]-C-terminal-Gly-aminoethanethioate + 2-iminoacetate + 1-deoxy-D-xylulose 5-phosphate = [ThiS sulfur-carrier protein]-C-terminal Gly-Gly + 2-[(2R,5Z)-2-carboxy-4-methylthiazol-5(2H)-ylidene]ethyl phosphate + 2 H2O + H(+). It functions in the pathway cofactor biosynthesis; thiamine diphosphate biosynthesis. Catalyzes the rearrangement of 1-deoxy-D-xylulose 5-phosphate (DXP) to produce the thiazole phosphate moiety of thiamine. Sulfur is provided by the thiocarboxylate moiety of the carrier protein ThiS. In vitro, sulfur can be provided by H(2)S. The protein is Thiazole synthase of Salinibacter ruber (strain DSM 13855 / M31).